The sequence spans 169 residues: Lutropin/choriogonadotropin subunit beta (169 aa).

The first 20 residues, 1-20 (METLQGLLLWMLLSVGGVWA), serve as a signal peptide directing secretion. 6 disulfides stabilise this stretch: cysteine 29-cysteine 77, cysteine 43-cysteine 92, cysteine 46-cysteine 130, cysteine 54-cysteine 108, cysteine 58-cysteine 110, and cysteine 113-cysteine 120. Residue asparagine 33 is glycosylated (N-linked (GlcNAc...) asparagine). The tract at residues 131–169 (APQASSSSKDPPSQPLTSTSTPTPGASRRSSHPLPIKTS) is disordered. Residues serine 138 and serine 143 are each glycosylated (O-linked (GalNAc...) serine). Low complexity predominate over residues 145-158 (PLTSTSTPTPGASR). Threonine 147 is a glycosylation site (O-linked (GalNAc...) threonine). Serine 148 carries an O-linked (GalNAc...) serine glycan. Threonine 149 carries an O-linked (GalNAc...) threonine glycan. O-linked (GalNAc...) serine glycosylation is present at serine 150. O-linked (GalNAc...) threonine glycosylation is found at threonine 151 and threonine 153. 4 O-linked (GalNAc...) serine glycosylation sites follow: serine 157, serine 160, serine 161, and serine 169.

Belongs to the glycoprotein hormones subunit beta family. Heterodimer of a common alpha chain and a unique beta chain which confers biological specificity to thyrotropin, lutropin, follitropin and gonadotropin. In terms of processing, microheterogeneity at Asn-33. O-glycosylation appears to be responsible for the beta subunit contribution to the difference in LH-receptor binding activity between LSH-B and CG-B.

It is found in the secreted. Promotes spermatogenesis and ovulation by stimulating the testes and ovaries to synthesize steroids. In Equus caballus (Horse), this protein is Lutropin/choriogonadotropin subunit beta (LHB).